The following is a 615-amino-acid chain: uncharacterized protein (615 aa).

It belongs to the NodU/CmcH family.

This is an uncharacterized protein from Synechocystis sp. (strain ATCC 27184 / PCC 6803 / Kazusa).